A 494-amino-acid polypeptide reads, in one-letter code: Protein DETOXIFICATION 21 (494 aa).

Alanine 2 is subject to N-acetylalanine. Helical transmembrane passes span leucine 40–isoleucine 60, leucine 73–alanine 95, isoleucine 123–leucine 143, isoleucine 158–methionine 178, isoleucine 188–methionine 208, glycine 217–valine 237, glycine 268–leucine 288, alanine 297–alanine 317, leucine 340–leucine 360, leucine 384–glycine 404, leucine 416–leucine 436, and valine 441–leucine 461.

The protein belongs to the multi antimicrobial extrusion (MATE) (TC 2.A.66.1) family.

It is found in the membrane. This Arabidopsis thaliana (Mouse-ear cress) protein is Protein DETOXIFICATION 21.